We begin with the raw amino-acid sequence, 372 residues long: N-methyl-L-tryptophan oxidase (372 aa).

4 to 34 (DLIIIGSGSVGAAAGYYATRAGLKVLMTDAH) serves as a coordination point for FAD. Residue C307 is modified to S-8alpha-FAD cysteine.

It belongs to the MSOX/MTOX family. MTOX subfamily. In terms of assembly, monomer. The cofactor is FAD.

The enzyme catalyses N(alpha)-methyl-L-tryptophan + O2 + H2O = L-tryptophan + formaldehyde + H2O2. Its function is as follows. Catalyzes the oxidative demethylation of N-methyl-L-tryptophan. The chain is N-methyl-L-tryptophan oxidase from Citrobacter koseri (strain ATCC BAA-895 / CDC 4225-83 / SGSC4696).